A 668-amino-acid chain; its full sequence is SH2 domain-containing protein B (668 aa).

The tract at residues 373–411 (SVSGSEESYQQCNSHPQTSRQFENGNGMRLHEEDNSSID) is disordered. The segment covering 374–396 (VSGSEESYQQCNSHPQTSRQFEN) has biased composition (polar residues). Residues 574 to 642 (WIEGFITKEE…DNICESSERY (69 aa)) enclose the SH2 domain.

Phosphorylated on tyrosine residues. In terms of tissue distribution, expressed in roots, leaves, stems and flowers.

This Arabidopsis thaliana (Mouse-ear cress) protein is SH2 domain-containing protein B.